Reading from the N-terminus, the 429-residue chain is Ribosomal RNA small subunit methyltransferase B (429 aa).

Residues 254 to 260, D277, D303, and D322 contribute to the S-adenosyl-L-methionine site; that span reads CAAPGGK. Catalysis depends on C375, which acts as the Nucleophile. A disordered region spans residues 397–419; sequence ALSETGTPDQPGQQNLPGGEEGD. Residues 400 to 412 are compositionally biased toward polar residues; the sequence is ETGTPDQPGQQNL.

It belongs to the class I-like SAM-binding methyltransferase superfamily. RsmB/NOP family.

It is found in the cytoplasm. The enzyme catalyses cytidine(967) in 16S rRNA + S-adenosyl-L-methionine = 5-methylcytidine(967) in 16S rRNA + S-adenosyl-L-homocysteine + H(+). In terms of biological role, specifically methylates the cytosine at position 967 (m5C967) of 16S rRNA. The protein is Ribosomal RNA small subunit methyltransferase B of Salmonella enteritidis PT4 (strain P125109).